The sequence spans 305 residues: ATP synthase gamma chain (305 aa).

This sequence belongs to the ATPase gamma chain family. As to quaternary structure, F-type ATPases have 2 components, CF(1) - the catalytic core - and CF(0) - the membrane proton channel. CF(1) has five subunits: alpha(3), beta(3), gamma(1), delta(1), epsilon(1). CF(0) has three main subunits: a, b and c.

It localises to the cell membrane. Its function is as follows. Produces ATP from ADP in the presence of a proton gradient across the membrane. The gamma chain is believed to be important in regulating ATPase activity and the flow of protons through the CF(0) complex. The chain is ATP synthase gamma chain from Streptomyces coelicolor (strain ATCC BAA-471 / A3(2) / M145).